The sequence spans 602 residues: Elongation factor 4 (602 aa).

Residues 6 to 188 (DHIRNFSIVA…AIVNKLPAPK (183 aa)) form the tr-type G domain. Residues 18–23 (DHGKST) and 135–138 (NKID) contribute to the GTP site.

It belongs to the TRAFAC class translation factor GTPase superfamily. Classic translation factor GTPase family. LepA subfamily.

Its subcellular location is the cell inner membrane. It carries out the reaction GTP + H2O = GDP + phosphate + H(+). Functionally, required for accurate and efficient protein synthesis under certain stress conditions. May act as a fidelity factor of the translation reaction, by catalyzing a one-codon backward translocation of tRNAs on improperly translocated ribosomes. Back-translocation proceeds from a post-translocation (POST) complex to a pre-translocation (PRE) complex, thus giving elongation factor G a second chance to translocate the tRNAs correctly. Binds to ribosomes in a GTP-dependent manner. This Brucella melitensis biotype 2 (strain ATCC 23457) protein is Elongation factor 4.